Reading from the N-terminus, the 275-residue chain is MTDDKDVLRDVWFGRIPTCFTLYQDEITEREAEPYYLLLPRVSYLTLVTDKVKKHFQKVMRQEDVSEIWFEYEGTPLKWHYPIGLLFDLLASSSALPWNITVHFKSFPEKDLLHCPSKDAVEAHFMSCMKEADALKHKSQVINEMQKKDHKQLWMGLQNDRFDQFWAINRKLMEYPPEENGFRYIPFRIYQTTTERPFIQKLFRPVAADGQLHTLGDLLREVCPSAVAPEDGEKRSQVMIHGIEPMLETPLQWLSEHLSYPDNFLHISIVPQPTD.

Met-1 carries the post-translational modification N-acetylmethionine. Lys-130 participates in a covalent cross-link: Glycyl lysine isopeptide (Lys-Gly) (interchain with G-Cter in ATG12).

Belongs to the ATG5 family. Forms a conjugate with ATG12. Part of the minor complex composed of 4 sets of ATG12-ATG5 and ATG16L1 (400 kDa); this complex interacts with ATG3 leading to disruption of ATG7 interaction and promotion of ATG8-like proteins lipidation. Forms an 800-kDa complex composed of ATG12-ATG5 and ATG16L2. The ATG12-ATG5 conjugate interacts with RAB33A; this interaction is bridged by ATG16L1 and promotes ATG12-ATG5-ATG16L1 complex recruitment to phagophores. Interacts with TECPR1; the interaction is direct and does not take place when ATG16L1 is associated with the ATG5-ATG12 conjugate. Interacts with DHX58/RIG-1, IFIH1/MDA5 and MAVS/IPS-1 in monomeric form as well as in ATG12-ATG5 conjugate form. The interaction with MAVS is further enhanced upon vesicular stomatitis virus (VSV) infection. Interacts with ATG3. Interacts with ATG7 and ATG10. Interacts with FADD. Interacts with Bassoon/BSN; this interaction is important for the regulation of presynaptic autophagy. Interacts with ATG16L2. Conjugated to ATG12; which is essential for autophagy, but is not required for association with isolation membrane. Post-translationally, acetylated by EP300. As to expression, ubiquitous.

It is found in the cytoplasm. Its subcellular location is the preautophagosomal structure membrane. In terms of biological role, involved in autophagic vesicle formation. Conjugation with ATG12, through a ubiquitin-like conjugating system involving ATG7 as an E1-like activating enzyme and ATG10 as an E2-like conjugating enzyme, is essential for its function. The ATG12-ATG5 conjugate acts as an E3-like enzyme which is required for lipidation of ATG8 family proteins and their association to the vesicle membranes. Involved in mitochondrial quality control after oxidative damage, and in subsequent cellular longevity. Plays a critical role in multiple aspects of lymphocyte development and is essential for both B and T lymphocyte survival and proliferation. Required for optimal processing and presentation of antigens for MHC II. Involved in the maintenance of axon morphology and membrane structures, as well as in normal adipocyte differentiation. Promotes primary ciliogenesis through removal of OFD1 from centriolar satellites and degradation of IFT20 via the autophagic pathway. As part of the ATG8 conjugation system with ATG12 and ATG16L1, required for recruitment of LRRK2 to stressed lysosomes and induction of LRRK2 kinase activity in response to lysosomal stress. Functionally, may play an important role in the apoptotic process, possibly within the modified cytoskeleton. Its expression is a relatively late event in the apoptotic process, occurring downstream of caspase activity. Plays a crucial role in IFN-gamma-induced autophagic cell death by interacting with FADD. (Microbial infection) May act as a proviral factor. In association with ATG12, negatively regulates the innate antiviral immune response by impairing the type I IFN production pathway upon vesicular stomatitis virus (VSV) infection. The polypeptide is Autophagy protein 5 (Mus musculus (Mouse)).